The chain runs to 224 residues: Ribonuclease HII (224 aa).

The RNase H type-2 domain occupies Met1–Ala210. 3 residues coordinate a divalent metal cation: Asp7, Glu8, and Asp105.

The protein belongs to the RNase HII family. It depends on Mn(2+) as a cofactor. Mg(2+) is required as a cofactor.

Its subcellular location is the cytoplasm. The catalysed reaction is Endonucleolytic cleavage to 5'-phosphomonoester.. In terms of biological role, endonuclease that specifically degrades the RNA of RNA-DNA hybrids. The protein is Ribonuclease HII of Pyrococcus furiosus (strain ATCC 43587 / DSM 3638 / JCM 8422 / Vc1).